The following is a 497-amino-acid chain: 4,4'-diaponeurosporene oxygenase (497 aa).

7–19 (VIGGGLGGISAAI) is a binding site for FAD.

Belongs to the carotenoid/retinoid oxidoreductase family. CrtP subfamily. The cofactor is FAD.

It catalyses the reaction all-trans-4,4'-diaponeurosporene + 2 AH2 + 2 O2 = 4,4'-diaponeurosporenal + 2 A + 3 H2O. It participates in carotenoid biosynthesis; staphyloxanthin biosynthesis; staphyloxanthin from farnesyl diphosphate: step 3/5. In terms of biological role, involved in the biosynthesis of the yellow-orange carotenoid staphyloxanthin, which plays a role in the virulence via its protective function against oxidative stress. Catalyzes the oxidation of the terminal methyl side group of 4,4'-diaponeurosporene to form 4,4'-diaponeurosporen-4-al. This is 4,4'-diaponeurosporene oxygenase from Staphylococcus aureus (strain MRSA252).